The following is a 717-amino-acid chain: Protein E2 homolog (717 aa).

This sequence belongs to the poxviridae E2 protein family.

In Fowlpox virus (strain NVSL) (FPV), this protein is Protein E2 homolog.